A 316-amino-acid chain; its full sequence is Secondary metabolism regulator laeA (316 aa).

Belongs to the methyltransferase superfamily. LaeA methyltransferase family. Component of the heterotrimeric velvet complex composed of laeA, ve1 and velB; Ve1 acting as a bridging protein between laeA and velB. Interacts directly with veA.

The protein resides in the nucleus. It is found in the cytoplasm. It carries out the reaction L-methionyl-[protein] + S-adenosyl-L-methionine = S-methyl-L-methionyl-[protein] + S-adenosyl-L-homocysteine. Its function is as follows. Methyltransferase that performs automethylation. No other methyl-accepting substrate has been identified yet. Component of the velvet transcription factor complex that acts as a global regulator for secondary metabolite gene expression. Controls the expression of the mycotoxins trichothecenes and zearalenon gene clusters. Negatively controls perithecial induction, but positively controls virulence toward the host plant. The protein is Secondary metabolism regulator laeA of Gibberella zeae (strain ATCC MYA-4620 / CBS 123657 / FGSC 9075 / NRRL 31084 / PH-1) (Wheat head blight fungus).